The following is a 139-amino-acid chain: Large ribosomal subunit protein uL16 (139 aa).

Belongs to the universal ribosomal protein uL16 family. As to quaternary structure, part of the 50S ribosomal subunit.

Binds 23S rRNA and is also seen to make contacts with the A and possibly P site tRNAs. This chain is Large ribosomal subunit protein uL16, found in Synechocystis sp. (strain ATCC 27184 / PCC 6803 / Kazusa).